The sequence spans 419 residues: Acyl transferase 9 (419 aa).

Catalysis depends on proton acceptor residues His161 and Asp362.

The protein belongs to the plant acyltransferase family.

Involved in the incorporation of ferulate into the cell wall. May act as arabinoxylan feruloyl transferase. The polypeptide is Acyl transferase 9 (Oryza sativa subsp. japonica (Rice)).